The chain runs to 93 residues: Large ribosomal subunit protein eL42 (93 aa).

Cys11, Cys14, Cys71, and Cys74 together coordinate Zn(2+). A C4-type zinc finger spans residues 11–74 (CPYCKKHTSH…IALRLVCDEC (64 aa)).

The protein belongs to the eukaryotic ribosomal protein eL42 family. Part of the 50S ribosomal subunit. The cofactor is Zn(2+).

In terms of biological role, binds to the 23S rRNA. This chain is Large ribosomal subunit protein eL42, found in Thermoplasma acidophilum (strain ATCC 25905 / DSM 1728 / JCM 9062 / NBRC 15155 / AMRC-C165).